Here is a 198-residue protein sequence, read N- to C-terminus: MIEIPTDLPAELVPLSWLIGVWEGTGVLDYAIGDDHTEREFGQRIGFSHDGQNYLAYSSTAWLLDSDRTPLAAESGYWRLSRTLIEGDAGPGMLPGVGPRPFGTAQSVEALRASHGGFDIDVSIVHPNGVSELYIGRVNGPRIDLATDAVVRTAGAKEYTAATRLYGLVENHLLWAWDIAALGQELRTHASARLAKAE.

A GXWXGXG motif is present at residues 20 to 26; that stretch reads GVWEGTG. His189 contributes to the heme b binding site.

Belongs to the nitrobindin family. In terms of assembly, homodimer. Heme b is required as a cofactor.

It catalyses the reaction peroxynitrite = nitrate. It functions in the pathway nitrogen metabolism. In terms of biological role, heme-binding protein able to scavenge peroxynitrite and to protect free L-tyrosine against peroxynitrite-mediated nitration, by acting as a peroxynitrite isomerase that converts peroxynitrite to nitrate. Therefore, this protein likely plays a role in peroxynitrite sensing and in the detoxification of reactive nitrogen and oxygen species (RNS and ROS, respectively). Is able to bind nitric oxide (NO) in vitro, but may act as a sensor of peroxynitrite levels in vivo. In Leifsonia xyli subsp. xyli (strain CTCB07), this protein is Peroxynitrite isomerase.